A 253-amino-acid chain; its full sequence is 3-dehydroquinate dehydratase (253 aa).

Residues 46–48 and R82 contribute to the 3-dehydroquinate site; that span reads EWR. H143 functions as the Proton donor/acceptor in the catalytic mechanism. Catalysis depends on K170, which acts as the Schiff-base intermediate with substrate. R213, S232, and Q236 together coordinate 3-dehydroquinate.

It belongs to the type-I 3-dehydroquinase family. Homodimer.

It carries out the reaction 3-dehydroquinate = 3-dehydroshikimate + H2O. The protein operates within metabolic intermediate biosynthesis; chorismate biosynthesis; chorismate from D-erythrose 4-phosphate and phosphoenolpyruvate: step 3/7. Its function is as follows. Involved in the third step of the chorismate pathway, which leads to the biosynthesis of aromatic amino acids. Catalyzes the cis-dehydration of 3-dehydroquinate (DHQ) and introduces the first double bond of the aromatic ring to yield 3-dehydroshikimate. The polypeptide is 3-dehydroquinate dehydratase (Syntrophotalea carbinolica (strain DSM 2380 / NBRC 103641 / GraBd1) (Pelobacter carbinolicus)).